A 280-amino-acid chain; its full sequence is Borealin (280 aa).

A compositionally biased stretch (basic residues) spans 140–153; it reads KVAAKKPSTARRTR. The interval 140 to 187 is disordered; that stretch reads KVAAKKPSTARRTRASVGNVANTSKRTSKRGRATPSASKQAETSLLGY.

This sequence belongs to the borealin family. As to quaternary structure, component of the CPC at least composed of survivin/birc5, incenp, cdca8/borealin and/or cdca9/dasra-A, and aurkb/aurora-B. Interacts with incenp (via N-terminus).

The protein resides in the nucleus. It is found in the chromosome. Its subcellular location is the centromere. The protein localises to the cytoplasm. It localises to the cytoskeleton. The protein resides in the spindle. Its function is as follows. Component of the chromosomal passenger complex (CPC), a complex that acts as a key regulator of mitosis. The CPC complex has essential functions at the centromere in ensuring correct chromosome alignment and segregation and is required for chromatin-induced microtubule stabilization and spindle assembly. Contributes to CPC function by facilitating loading of the CPC onto chromosomes. This chain is Borealin (cdca8), found in Xenopus laevis (African clawed frog).